The sequence spans 115 residues: Large ribosomal subunit protein bL20 (115 aa).

This sequence belongs to the bacterial ribosomal protein bL20 family.

Functionally, binds directly to 23S ribosomal RNA and is necessary for the in vitro assembly process of the 50S ribosomal subunit. It is not involved in the protein synthesizing functions of that subunit. The protein is Large ribosomal subunit protein bL20 of Bdellovibrio bacteriovorus (strain ATCC 15356 / DSM 50701 / NCIMB 9529 / HD100).